The following is a 317-amino-acid chain: Melanocyte-stimulating hormone receptor (317 aa).

The Extracellular segment spans residues 1–37 (MPMQEPQRRLLDPFNSTRTGTPHLKLSANQTGPWCLH). N15 and N29 each carry an N-linked (GlcNAc...) asparagine glycan. Residues 38–63 (VSIPDGLFLSLGLVSLVENVLVVISI) traverse the membrane as a helical segment. The Cytoplasmic segment spans residues 64-72 (AKNRNLHSP). Residues 73-93 (MYYFICCLALSDLLVSVSIVL) traverse the membrane as a helical segment. Over 94–118 (ETTLILVLEAGALATRVTVVQQLDN) the chain is Extracellular. A helical transmembrane segment spans residues 119–140 (VIDVLICGSMVSSLCFLGAIAV). At 141–163 (DRYISIFYALRYHSIVTLPRARW) the chain is on the cytoplasmic side. A helical membrane pass occupies residues 164–183 (AIVAIWVASISSSTLFVAYY). At 184 to 191 (NHTAVLLC) the chain is on the extracellular side. A helical transmembrane segment spans residues 192–211 (LVTFFLATLALMAVLYVHML). The Cytoplasmic segment spans residues 212–240 (ARAHQHAQAIAQLHKRQHLVHQGFRLKGA). The helical transmembrane segment at 241–266 (ATLTILLGIFFLCWGPFFLYLTLIVL) threads the bilayer. Topologically, residues 267-279 (CPKHPTCSCFFKN) are extracellular. The chain crosses the membrane as a helical span at residues 280–300 (LNLFLALIIFNSIVDPLIYAF). The Cytoplasmic portion of the chain corresponds to 301 to 317 (RSQELRMTLKEVLLCSW). C315 is lipidated: S-palmitoyl cysteine.

It belongs to the G-protein coupled receptor 1 family. As to quaternary structure, interacts with MGRN1, but does not undergo MGRN1-mediated ubiquitination; this interaction competes with GNAS-binding and thus inhibits agonist-induced cAMP production. Interacts with OPN3; the interaction results in a decrease in MC1R-mediated cAMP signaling and ultimately a decrease in melanin production in melanocytes.

It is found in the cell membrane. Its function is as follows. Receptor for MSH (alpha, beta and gamma) and ACTH. The activity of this receptor is mediated by G proteins which activate adenylate cyclase. Mediates melanogenesis, the production of eumelanin (black/brown) and phaeomelanin (red/yellow), via regulation of cAMP signaling in melanocytes. This Chaetodipus baileyi (Bailey's pocket mouse) protein is Melanocyte-stimulating hormone receptor (MC1R).